Consider the following 66-residue polypeptide: DNA-directed RNA polymerase subunit omega (66 aa).

The protein belongs to the RNA polymerase subunit omega family. In terms of assembly, the RNAP catalytic core consists of 2 alpha, 1 beta, 1 beta' and 1 omega subunit. When a sigma factor is associated with the core the holoenzyme is formed, which can initiate transcription.

It carries out the reaction RNA(n) + a ribonucleoside 5'-triphosphate = RNA(n+1) + diphosphate. Functionally, promotes RNA polymerase assembly. Latches the N- and C-terminal regions of the beta' subunit thereby facilitating its interaction with the beta and alpha subunits. This Geobacillus kaustophilus (strain HTA426) protein is DNA-directed RNA polymerase subunit omega.